We begin with the raw amino-acid sequence, 212 residues long: Peptide methionine sulfoxide reductase MsrA (212 aa).

C52 is a catalytic residue.

This sequence belongs to the MsrA Met sulfoxide reductase family.

The catalysed reaction is L-methionyl-[protein] + [thioredoxin]-disulfide + H2O = L-methionyl-(S)-S-oxide-[protein] + [thioredoxin]-dithiol. It catalyses the reaction [thioredoxin]-disulfide + L-methionine + H2O = L-methionine (S)-S-oxide + [thioredoxin]-dithiol. In terms of biological role, has an important function as a repair enzyme for proteins that have been inactivated by oxidation. Catalyzes the reversible oxidation-reduction of methionine sulfoxide in proteins to methionine. The protein is Peptide methionine sulfoxide reductase MsrA of Salmonella choleraesuis (strain SC-B67).